Here is a 528-residue protein sequence, read N- to C-terminus: GTPase Obg (528 aa).

An Obg domain is found at 2–159 (ASFVDRVVLH…SDIVLELKSI (158 aa)). In terms of domain architecture, OBG-type G spans 160–343 (ADIALVGFPS…LGFAMAEIVQ (184 aa)). Residues 166–173 (GFPSAGKS), 191–195 (FTTLI), 212–215 (DVPG), 295–298 (NKVD), and 324–326 (SAT) contribute to the GTP site. Serine 173 and threonine 193 together coordinate Mg(2+). Positions 363–447 (PRAVNESGFK…DDGVVFDWEP (85 aa)) constitute an OCT domain. The tract at residues 471–490 (DRPTRSQKRDEQIERREAKA) is disordered.

Belongs to the TRAFAC class OBG-HflX-like GTPase superfamily. OBG GTPase family. As to quaternary structure, monomer. It depends on Mg(2+) as a cofactor.

It is found in the cytoplasm. In terms of biological role, an essential GTPase which binds GTP, GDP and possibly (p)ppGpp with moderate affinity, with high nucleotide exchange rates and a fairly low GTP hydrolysis rate. Plays a role in control of the cell cycle, stress response, ribosome biogenesis and in those bacteria that undergo differentiation, in morphogenesis control. This chain is GTPase Obg, found in Paenarthrobacter aurescens (strain TC1).